We begin with the raw amino-acid sequence, 292 residues long: Acetylglutamate kinase (292 aa).

Substrate contacts are provided by residues 64–65, Arg86, and Asn190; that span reads GG.

It belongs to the acetylglutamate kinase family. ArgB subfamily.

It localises to the cytoplasm. The enzyme catalyses N-acetyl-L-glutamate + ATP = N-acetyl-L-glutamyl 5-phosphate + ADP. Its pathway is amino-acid biosynthesis; L-arginine biosynthesis; N(2)-acetyl-L-ornithine from L-glutamate: step 2/4. Catalyzes the ATP-dependent phosphorylation of N-acetyl-L-glutamate. The chain is Acetylglutamate kinase from Geotalea daltonii (strain DSM 22248 / JCM 15807 / FRC-32) (Geobacter daltonii).